We begin with the raw amino-acid sequence, 362 residues long: Probable dual-specificity RNA methyltransferase RlmN (362 aa).

The Proton acceptor role is filled by glutamate 105. One can recognise a Radical SAM core domain in the interval 111 to 344 (HEYGNSICVT…VTIRREQGHD (234 aa)). Residues cysteine 118 and cysteine 349 are joined by a disulfide bond. [4Fe-4S] cluster is bound by residues cysteine 125, cysteine 129, and cysteine 132. Residues 175-176 (GE), serine 207, 230-232 (SLH), and asparagine 306 each bind S-adenosyl-L-methionine. The S-methylcysteine intermediate role is filled by cysteine 349.

The protein belongs to the radical SAM superfamily. RlmN family. It depends on [4Fe-4S] cluster as a cofactor.

Its subcellular location is the cytoplasm. It catalyses the reaction adenosine(2503) in 23S rRNA + 2 reduced [2Fe-2S]-[ferredoxin] + 2 S-adenosyl-L-methionine = 2-methyladenosine(2503) in 23S rRNA + 5'-deoxyadenosine + L-methionine + 2 oxidized [2Fe-2S]-[ferredoxin] + S-adenosyl-L-homocysteine. The enzyme catalyses adenosine(37) in tRNA + 2 reduced [2Fe-2S]-[ferredoxin] + 2 S-adenosyl-L-methionine = 2-methyladenosine(37) in tRNA + 5'-deoxyadenosine + L-methionine + 2 oxidized [2Fe-2S]-[ferredoxin] + S-adenosyl-L-homocysteine. Specifically methylates position 2 of adenine 2503 in 23S rRNA and position 2 of adenine 37 in tRNAs. In Bacillus cereus (strain B4264), this protein is Probable dual-specificity RNA methyltransferase RlmN.